Consider the following 1084-residue polypeptide: Probable hemoglobin and hemoglobin-haptoglobin-binding protein 3 (1084 aa).

The N-terminal stretch at Met1–Ala24 is a signal peptide. Repeat copies occupy residues Gln26–Asn29, Gln30–Asn33, Gln34–Asn37, Gln38–Asn41, Gln42–Asn45, Gln46–Asn49, Gln50–Asn53, Gln54–Asn57, Gln58–Asn61, Gln62–Asn65, Gln66–Asn69, and Gln70–Asn73. Positions Gln26–Asn73 are 12 X 4 AA tandem repeats of Q-P-T-N. The segment covering Gln26 to Asn75 has biased composition (low complexity). The disordered stretch occupies residues Gln26–Asn77. The short motif at Glu83–Ser90 is the TonB box element. A TBDR plug domain is found at Asn95–Lys220. The TBDR beta-barrel domain maps to Asp228–Phe1084. Residues Asn1067 to Phe1084 carry the TonB C-terminal box motif.

This sequence belongs to the TonB-dependent receptor family. Hemoglobin/haptoglobin binding protein subfamily.

The protein resides in the cell outer membrane. Acts as a receptor for hemoglobin or the hemoglobin/haptoglobin complex of the human host and is required for heme uptake. The sequence is that of Probable hemoglobin and hemoglobin-haptoglobin-binding protein 3 from Haemophilus influenzae (strain ATCC 51907 / DSM 11121 / KW20 / Rd).